Reading from the N-terminus, the 684-residue chain is Pescadillo homolog (684 aa).

The segment at 284 to 352 (DAAAAEASSN…DSDEEADDEA (69 aa)) is disordered. Residues 285–294 (AAAAEASSNA) are compositionally biased toward low complexity. Basic and acidic residues predominate over residues 296–310 (TRKDGKKLSTRDVKR). The segment covering 342 to 352 (QDSDEEADDEA) has biased composition (acidic residues). The region spanning 387–486 (PLPMLFSRYV…QILPTDPYRP (100 aa)) is the BRCT domain. Disordered stretches follow at residues 508–580 (GYVP…ALLA) and 612–684 (AASL…NKKP). Acidic residues predominate over residues 528 to 543 (ADEDEDEDEDEDEDED). A compositionally biased stretch (basic and acidic residues) spans 544-570 (KAGSGRGDDKNVAAREQDAVEKHDKTP). A compositionally biased stretch (basic residues) spans 612–624 (AASLKSHKKKKRT). The span at 663–675 (KKKEEKMRLEAKK) shows a compositional bias: basic and acidic residues.

It belongs to the pescadillo family. Component of the NOP7 complex, composed of ERB1, NOP7 and YTM1. The complex is held together by ERB1, which interacts with NOP7 via its N-terminal domain and with YTM1 via a high-affinity interaction between the seven-bladed beta-propeller domains of the 2 proteins. The NOP7 complex associates with the 66S pre-ribosome.

It localises to the nucleus. Its subcellular location is the nucleolus. The protein localises to the nucleoplasm. Component of the NOP7 complex, which is required for maturation of the 25S and 5.8S ribosomal RNAs and formation of the 60S ribosome. The protein is Pescadillo homolog of Malassezia globosa (strain ATCC MYA-4612 / CBS 7966) (Dandruff-associated fungus).